The primary structure comprises 3456 residues: Genome polyprotein (3456 aa).

Residues 600–743 (NVANIPLDDF…ATRLKQIQFY (144 aa)) enclose the Peptidase S30 domain. Catalysis depends on for P1 proteinase activity residues His640, Asp652, and Ser689. A Peptidase C6 domain is found at 1075–1196 (VWEFNEGYCY…EGEMLTYKVG (122 aa)). Residue Cys1083 is the For helper component proteinase activity of the active site. Residues 1094-1126 (FINEDEMEFYKNQMNQIVLNLGAWPTFEQYLVE) form an HAT 1 repeat. Catalysis depends on His1155, which acts as the For helper component proteinase activity. The 152-residue stretch at 1617-1768 (NIRTSGETDV…TRHKIKVETL (152 aa)) folds into the Helicase ATP-binding domain. ATP is bound at residue 1630–1637 (SGVGGGKS). In terms of domain architecture, Helicase C-terminal spans 1787–1947 (DATSVGDVIL…GIKPVCDRVD (161 aa)). Residue Tyr2304 is modified to O-(5'-phospho-RNA)-tyrosine. The region spanning 2412 to 2636 (AVDSHVGTPT…VEWSRLLPTT (225 aa)) is the Peptidase C4 domain. Residues His2457, Asp2494, and Cys2566 each act as for nuclear inclusion protein A activity in the active site. The stretch at 2597 to 2629 (HIFEPVNETFIEMLAKMEYAKGFWKFNPELVEW) is one HAT 2 repeat. The region spanning 2891–3011 (WVFIDCDGSR…NCPRSTANAI (121 aa)) is the RdRp catalytic domain. An HAT 3 repeat occupies 3082–3115 (LNAAYIESFGYEDLMTEIEKFAHFWAKKHGLNDV).

Post-translationally, VPg is uridylylated by the polymerase and is covalently attached to the 5'-end of the genomic RNA. This uridylylated form acts as a nucleotide-peptide primer for the polymerase. Genome polyprotein of potyviruses undergoes post-translational proteolytic processing by the main proteinase NIa-pro resulting in the production of at least ten individual proteins. The P1 proteinase and the HC-pro cleave only their respective C-termini autocatalytically. 6K1 is essential for proper proteolytic separation of P3 from CI.

Its subcellular location is the host cytoplasmic vesicle. It localises to the virion. The catalysed reaction is RNA(n) + a ribonucleoside 5'-triphosphate = RNA(n+1) + diphosphate. It carries out the reaction Hydrolyzes glutaminyl bonds, and activity is further restricted by preferences for the amino acids in P6 - P1' that vary with the species of potyvirus, e.g. Glu-Xaa-Xaa-Tyr-Xaa-Gln-|-(Ser or Gly) for the enzyme from tobacco etch virus. The natural substrate is the viral polyprotein, but other proteins and oligopeptides containing the appropriate consensus sequence are also cleaved.. The enzyme catalyses Hydrolyzes a Gly-|-Gly bond at its own C-terminus, commonly in the sequence -Tyr-Xaa-Val-Gly-|-Gly, in the processing of the potyviral polyprotein.. Functionally, required for aphid transmission and also has proteolytic activity. Only cleaves a Gly-Gly dipeptide at its own C-terminus. Interacts with virions and aphid stylets. Acts as a suppressor of RNA-mediated gene silencing, also known as post-transcriptional gene silencing (PTGS), a mechanism of plant viral defense that limits the accumulation of viral RNAs. May have RNA-binding activity. Its function is as follows. Has helicase activity. It may be involved in replication. In terms of biological role, indispensable for virus replication. Mediates the cap-independent, EIF4E-dependent translation of viral genomic RNAs. Binds to the cap-binding site of host EIF4E and thus interferes with the host EIF4E-dependent mRNA export and translation. VPg-RNA directly binds EIF4E and is a template for transcription. Also forms trimeric complexes with EIF4E-EIF4G, which are templates for translation. Functionally, has RNA-binding and proteolytic activities. Its function is as follows. An RNA-dependent RNA polymerase that plays an essential role in the virus replication. In terms of biological role, involved in aphid transmission, cell-to-cell and systemis movement, encapsidation of the viral RNA and in the regulation of viral RNA amplification. This Sweet potato mild mottle virus (isolate Salazar) (SPMMV) protein is Genome polyprotein.